Consider the following 523-residue polypeptide: Peptide chain release factor 3 (523 aa).

Residues 8 to 275 (KKRRTFAIIS…TFLEYAPEPH (268 aa)) enclose the tr-type G domain. Residues 17–24 (SHPDAGKT), 85–89 (DTPGH), and 139–142 (NKLD) each bind GTP.

Belongs to the TRAFAC class translation factor GTPase superfamily. Classic translation factor GTPase family. PrfC subfamily.

It is found in the cytoplasm. In terms of biological role, increases the formation of ribosomal termination complexes and stimulates activities of RF-1 and RF-2. It binds guanine nucleotides and has strong preference for UGA stop codons. It may interact directly with the ribosome. The stimulation of RF-1 and RF-2 is significantly reduced by GTP and GDP, but not by GMP. The protein is Peptide chain release factor 3 of Lactococcus lactis subsp. cremoris (strain SK11).